Reading from the N-terminus, the 473-residue chain is tRNA modification GTPase MnmE (473 aa).

R28, E93, and R132 together coordinate (6S)-5-formyl-5,6,7,8-tetrahydrofolate. The region spanning 228 to 394 (GVATVLVGSP…LKQQMSNMVA (167 aa)) is the TrmE-type G domain. Residues 238 to 243 (NAGKST), 257 to 263 (SHQPGTT), and 282 to 285 (DTAG) contribute to the GTP site. Residues S242 and T263 each coordinate Mg(2+). K473 lines the (6S)-5-formyl-5,6,7,8-tetrahydrofolate pocket.

Belongs to the TRAFAC class TrmE-Era-EngA-EngB-Septin-like GTPase superfamily. TrmE GTPase family. Homodimer. Heterotetramer of two MnmE and two MnmG subunits. The cofactor is K(+).

The protein localises to the cytoplasm. Its function is as follows. Exhibits a very high intrinsic GTPase hydrolysis rate. Involved in the addition of a carboxymethylaminomethyl (cmnm) group at the wobble position (U34) of certain tRNAs, forming tRNA-cmnm(5)s(2)U34. This Chlorobium chlorochromatii (strain CaD3) protein is tRNA modification GTPase MnmE.